A 483-amino-acid chain; its full sequence is Betaine aldehyde dehydrogenase (483 aa).

K(+) is bound by residues Ile-27 and Asp-93. Residue Gly-149–Trp-151 coordinates NAD(+). Lys-161 acts as the Charge relay system in catalysis. Lys-175–Glu-178 lines the NAD(+) pocket. Val-179 serves as a coordination point for K(+). Ser-228–Thr-231 lines the NAD(+) pocket. Val-243 contacts K(+). The active-site Proton acceptor is the Glu-249. 3 residues coordinate NAD(+): Gly-251, Cys-283, and Glu-380. Residue Cys-283 is the Nucleophile of the active site. Position 283 is a cysteine sulfenic acid (-SOH) (Cys-283). Positions 450 and 453 each coordinate K(+). The active-site Charge relay system is the Glu-457.

This sequence belongs to the aldehyde dehydrogenase family. As to quaternary structure, dimer of dimers. The cofactor is K(+).

It carries out the reaction betaine aldehyde + NAD(+) + H2O = glycine betaine + NADH + 2 H(+). The protein operates within amine and polyamine biosynthesis; betaine biosynthesis via choline pathway; betaine from betaine aldehyde: step 1/1. Its function is as follows. Involved in the biosynthesis of the osmoprotectant glycine betaine. Catalyzes the irreversible oxidation of betaine aldehyde to the corresponding acid. This Cereibacter sphaeroides (strain ATCC 17025 / ATH 2.4.3) (Rhodobacter sphaeroides) protein is Betaine aldehyde dehydrogenase.